The sequence spans 334 residues: Large ribosomal subunit protein uL3 (334 aa).

Positions 1 to 10 (MGMKKNRPRR) are enriched in basic residues. Residues 1–21 (MGMKKNRPRRGSLAFSPRKRA) are disordered.

The protein belongs to the universal ribosomal protein uL3 family. Part of the 50S ribosomal subunit. Forms a cluster with proteins L14 and L24e.

Functionally, one of the primary rRNA binding proteins, it binds directly near the 3'-end of the 23S rRNA, where it nucleates assembly of the 50S subunit. The sequence is that of Large ribosomal subunit protein uL3 from Methanococcus maripaludis (strain C5 / ATCC BAA-1333).